Reading from the N-terminus, the 383-residue chain is Erythronate-4-phosphate dehydrogenase (383 aa).

2 residues coordinate substrate: serine 45 and threonine 67. Aspartate 147 contacts NAD(+). Residue arginine 208 is part of the active site. Aspartate 232 contributes to the NAD(+) binding site. The active site involves glutamate 237. Histidine 254 acts as the Proton donor in catalysis. An NAD(+)-binding site is contributed by glycine 257. Substrate is bound at residue tyrosine 258.

The protein belongs to the D-isomer specific 2-hydroxyacid dehydrogenase family. PdxB subfamily. Homodimer.

The protein localises to the cytoplasm. It carries out the reaction 4-phospho-D-erythronate + NAD(+) = (R)-3-hydroxy-2-oxo-4-phosphooxybutanoate + NADH + H(+). The protein operates within cofactor biosynthesis; pyridoxine 5'-phosphate biosynthesis; pyridoxine 5'-phosphate from D-erythrose 4-phosphate: step 2/5. In terms of biological role, catalyzes the oxidation of erythronate-4-phosphate to 3-hydroxy-2-oxo-4-phosphonooxybutanoate. This Psychromonas ingrahamii (strain DSM 17664 / CCUG 51855 / 37) protein is Erythronate-4-phosphate dehydrogenase.